The following is a 356-amino-acid chain: Trans-enoyl reductase pgmF (356 aa).

Residues 57–60 (VDFK), 175–178 (SGGC), 198–201 (STPN), tyrosine 216, 261–262 (VG), and 342–343 (AK) contribute to the NADP(+) site.

Belongs to the zinc-containing alcohol dehydrogenase family.

Functionally, FAD-linked oxidoreductase; part of the gene cluster that mediates the biosynthesis of pleosporalin A, ascomycone A, as well as a third cryptic naphthoquinone derived pigment, all responsible for the coloration of conidia. The pathway begins with the biosynthesis of the cyclized heptaketide 3-acetonyl-1,6,8-trihydroxy-2-naphthaldehyde by the NR-PKS pgmA. The C-6 hydroxyl group is further methylated by the O-methyltransferase pgmB to yield fusarubinaldehyde which is in turn oxidized by the cytochrome P450 monooxygenase pgmC at C-9. The C-1 hydroxyl group is then methylated spontaneously. Although pgmE, pgmD and pgmH are essential for the production of pleosporalin A, it is not the case for the 2 other final products and it remains difficult to assign a specific function to each enzyme. PgmF and pgmG seem not to be involved in pigment biosynthesis although they were regulated by the cluster-specific transcription factor pgmR. The chain is Trans-enoyl reductase pgmF from Aspergillus terreus (strain NIH 2624 / FGSC A1156).